A 335-amino-acid chain; its full sequence is MTVLIAKDLTFEPVVHRYDWTVDEVRELLERPLMDLLWQAQLVHRTANPGYRVQLASLLSVKTGGCQEDCAYCPQSMHNSSDVEGQPDLVVQIQTVLERARAAKDAGADRFCMGWAWREIRDGAQFEAMLAMVSGVRELGLEACVTAGMLTEKQASRLADAGLTAYNHNLDTSPEYYDQIITTRTYQERIETLQKVRSAGITLCCGGIIGMGESTLDRASLLCVLANINPHPESVPINGLVAVEGTPLQDLPAVDPLEMVRMVATARILMPRSRVRLSAGREQLGREAQILCLQAGADSIFYGDSLLTTSNPDVKTDRELLSQAGVHANWEESDE.

A Radical SAM core domain is found at 51-281 (YRVQLASLLS…RSRVRLSAGR (231 aa)). Positions 66, 70, and 73 each coordinate [4Fe-4S] cluster. [2Fe-2S] cluster contacts are provided by cysteine 112, cysteine 144, cysteine 204, and arginine 276.

Belongs to the radical SAM superfamily. Biotin synthase family. In terms of assembly, homodimer. [4Fe-4S] cluster serves as cofactor. It depends on [2Fe-2S] cluster as a cofactor.

It catalyses the reaction (4R,5S)-dethiobiotin + (sulfur carrier)-SH + 2 reduced [2Fe-2S]-[ferredoxin] + 2 S-adenosyl-L-methionine = (sulfur carrier)-H + biotin + 2 5'-deoxyadenosine + 2 L-methionine + 2 oxidized [2Fe-2S]-[ferredoxin]. It participates in cofactor biosynthesis; biotin biosynthesis; biotin from 7,8-diaminononanoate: step 2/2. Catalyzes the conversion of dethiobiotin (DTB) to biotin by the insertion of a sulfur atom into dethiobiotin via a radical-based mechanism. This chain is Biotin synthase, found in Prochlorococcus marinus (strain MIT 9303).